We begin with the raw amino-acid sequence, 1338 residues long: Serine/threonine-protein kinase cek1 (1338 aa).

One can recognise a PAS domain in the interval 28-98; sequence SKDENLQPSI…RAVNCLLKDD (71 aa). Positions 484-554 are disordered; that stretch reads PDFAIGSPMS…GRSSLFSRGR (71 aa). Residues 491-501 show a composition bias toward polar residues; sequence PMSQDSSNYSS. Serine 525 carries the phosphoserine modification. Over residues 541–550 the composition is skewed to polar residues; the sequence is PASNGRSSLF. The 370-residue stretch at 589–958 folds into the Protein kinase domain; it reads YKILKPISKG…VEEIKAHPFF (370 aa). ATP-binding positions include 595 to 603 and lysine 618; that span reads ISKGAFGSV. The Proton acceptor role is filled by aspartate 713. Residue serine 748 is modified to Phosphoserine. Polar residues predominate over residues 813–842; it reads ENSAEDSPTATNTPTSQVDESNIFRSTDSP. Disordered stretches follow at residues 813-844, 1010-1035, and 1159-1185; these read ENSA…SPRV, KLEE…LRSN, and SSTM…TSSD. An AGC-kinase C-terminal domain is found at 959–1057; the sequence is KSVNWDTILE…RNLDFLNKAN (99 aa). The segment covering 1159 to 1174 has biased composition (low complexity); that stretch reads SSTMSASQSQSSMHTA. Phosphoserine is present on serine 1211.

Belongs to the protein kinase superfamily. Ser/Thr protein kinase family.

The catalysed reaction is L-seryl-[protein] + ATP = O-phospho-L-seryl-[protein] + ADP + H(+). The enzyme catalyses L-threonyl-[protein] + ATP = O-phospho-L-threonyl-[protein] + ADP + H(+). In terms of biological role, may facilitate the progression of anaphase through direct or indirect interaction with the cut8 protein. The protein is Serine/threonine-protein kinase cek1 (cek1) of Schizosaccharomyces pombe (strain 972 / ATCC 24843) (Fission yeast).